A 301-amino-acid polypeptide reads, in one-letter code: Mitochondrial ornithine transporter 1 (301 aa).

6 consecutive transmembrane segments (helical) span residues 5 to 25 (PAIQ…ACVL), 68 to 88 (SPAL…YGFC), 110 to 130 (AAAG…TELV), 168 to 188 (GFYH…FFFF), 207 to 227 (LGPI…WLAV), and 237 to 257 (IQVL…LSIV). Solcar repeat units lie at residues 7-91 (IQAA…CQQV), 104-197 (LSDL…SRSF), and 207-293 (LGPI…SRKL).

It belongs to the mitochondrial carrier (TC 2.A.29) family. In terms of tissue distribution, expressed in the liver (at protein level).

The protein resides in the mitochondrion inner membrane. It is found in the mitochondrion membrane. It catalyses the reaction L-citrulline(in) + L-ornithine(out) + H(+)(in) = L-citrulline(out) + L-ornithine(in) + H(+)(out). The enzyme catalyses L-ornithine(in) + L-arginine(out) = L-ornithine(out) + L-arginine(in). The catalysed reaction is L-ornithine(out) + L-lysine(in) = L-ornithine(in) + L-lysine(out). It carries out the reaction L-ornithine(out) + H(+)(in) = L-ornithine(in) + H(+)(out). It catalyses the reaction L-lysine(out) + H(+)(in) = L-lysine(in) + H(+)(out). Its activity is regulated as follows. Inhibited by pyridoxal 5'-phosphate as well as by mercurials (mersalyl, p-chloromercuribenzene sulfonate, and mercuric chloride), N-ethylmaleimide and spermine. Its function is as follows. Mitochondrial ornithine-citrulline antiporter. Catalyzes the exchange between cytosolic ornithine and mitochondrial citrulline plus an H(+), the proton compensates the positive charge of ornithine thus leading to an electroneutral transport. Plays a crucial role in the urea cycle, by connecting the cytosolic and the intramitochondrial reactions of the urea cycle. Lysine and arginine are also transported by the antiport mechanism. In addition, catalyzes an electroneutral exchange of ornithine or lysine for H(+), a reaction driven by the pH gradient across the inner membrane. In Rattus norvegicus (Rat), this protein is Mitochondrial ornithine transporter 1 (Slc25a15).